Consider the following 205-residue polypeptide: Proteasome subunit beta type-3 (205 aa).

This sequence belongs to the peptidase T1B family. As to quaternary structure, the 26S proteasome consists of a 20S proteasome core and two 19S regulatory subunits. The 20S proteasome core is composed of 28 subunits that are arranged in four stacked rings, resulting in a barrel-shaped structure. The two end rings are each formed by seven alpha subunits, and the two central rings are each formed by seven beta subunits. The catalytic chamber with the active sites is on the inside of the barrel.

The protein resides in the cytoplasm. It is found in the nucleus. Functionally, non-catalytic component of the proteasome, a multicatalytic proteinase complex which is characterized by its ability to cleave peptides with Arg, Phe, Tyr, Leu, and Glu adjacent to the leaving group at neutral or slightly basic pH. The proteasome has an ATP-dependent proteolytic activity. This is Proteasome subunit beta type-3 (psmB3) from Dictyostelium discoideum (Social amoeba).